The primary structure comprises 208 residues: Protein-L-isoaspartate O-methyltransferase (208 aa).

Serine 59 is an active-site residue.

Belongs to the methyltransferase superfamily. L-isoaspartyl/D-aspartyl protein methyltransferase family.

It is found in the cytoplasm. It catalyses the reaction [protein]-L-isoaspartate + S-adenosyl-L-methionine = [protein]-L-isoaspartate alpha-methyl ester + S-adenosyl-L-homocysteine. Catalyzes the methyl esterification of L-isoaspartyl residues in peptides and proteins that result from spontaneous decomposition of normal L-aspartyl and L-asparaginyl residues. It plays a role in the repair and/or degradation of damaged proteins. The protein is Protein-L-isoaspartate O-methyltransferase of Escherichia coli O1:K1 / APEC.